We begin with the raw amino-acid sequence, 103 residues long: Large ribosomal subunit protein uL24 (103 aa).

Belongs to the universal ribosomal protein uL24 family. In terms of assembly, part of the 50S ribosomal subunit.

Its function is as follows. One of two assembly initiator proteins, it binds directly to the 5'-end of the 23S rRNA, where it nucleates assembly of the 50S subunit. In terms of biological role, one of the proteins that surrounds the polypeptide exit tunnel on the outside of the subunit. This Bacillus cytotoxicus (strain DSM 22905 / CIP 110041 / 391-98 / NVH 391-98) protein is Large ribosomal subunit protein uL24.